A 152-amino-acid polypeptide reads, in one-letter code: Cytochrome c-type biogenesis protein CcmE (152 aa).

At 1–9 the chain is on the cytoplasmic side; the sequence is MRGLKKQRR. A helical; Signal-anchor for type II membrane protein membrane pass occupies residues 10–30; it reads IQILIVAAVALTLSSVLIGYA. Residues 31 to 152 lie on the Periplasmic side of the membrane; it reads LRDGINFFRP…PDGYARDGDS (122 aa). Residues histidine 123 and tyrosine 127 each contribute to the heme site.

The protein belongs to the CcmE/CycJ family.

The protein resides in the cell inner membrane. Heme chaperone required for the biogenesis of c-type cytochromes. Transiently binds heme delivered by CcmC and transfers the heme to apo-cytochromes in a process facilitated by CcmF and CcmH. This is Cytochrome c-type biogenesis protein CcmE from Jannaschia sp. (strain CCS1).